Consider the following 323-residue polypeptide: Glutathione synthetase (323 aa).

One can recognise an ATP-grasp domain in the interval 133–317 (KMYALQFQSV…IGDQTIAALE (185 aa)). 159–215 (LDELRAAVLKPLGGKAGEGILFLDPGDRNFNSLVEISTQQGQLPVMVQQYLPEAKDG) lines the ATP pocket. Glu288 and Asn290 together coordinate Mg(2+).

It belongs to the prokaryotic GSH synthase family. Mg(2+) serves as cofactor. Mn(2+) is required as a cofactor.

It catalyses the reaction gamma-L-glutamyl-L-cysteine + glycine + ATP = glutathione + ADP + phosphate + H(+). Its pathway is sulfur metabolism; glutathione biosynthesis; glutathione from L-cysteine and L-glutamate: step 2/2. In Synechococcus elongatus (strain ATCC 33912 / PCC 7942 / FACHB-805) (Anacystis nidulans R2), this protein is Glutathione synthetase.